Reading from the N-terminus, the 417-residue chain is NADH-quinone oxidoreductase subunit D (417 aa).

Belongs to the complex I 49 kDa subunit family. NDH-1 is composed of 14 different subunits. Subunits NuoB, C, D, E, F, and G constitute the peripheral sector of the complex.

It is found in the cell inner membrane. It carries out the reaction a quinone + NADH + 5 H(+)(in) = a quinol + NAD(+) + 4 H(+)(out). In terms of biological role, NDH-1 shuttles electrons from NADH, via FMN and iron-sulfur (Fe-S) centers, to quinones in the respiratory chain. The immediate electron acceptor for the enzyme in this species is believed to be ubiquinone. Couples the redox reaction to proton translocation (for every two electrons transferred, four hydrogen ions are translocated across the cytoplasmic membrane), and thus conserves the redox energy in a proton gradient. In Francisella tularensis subsp. holarctica (strain FTNF002-00 / FTA), this protein is NADH-quinone oxidoreductase subunit D.